Here is a 329-residue protein sequence, read N- to C-terminus: Ketol-acid reductoisomerase (NADP(+)) (329 aa).

Residues 1-181 form the KARI N-terminal Rossmann domain; that stretch reads MKVYYENDAD…GATRSGVLQT (181 aa). Residues 24–27, Arg-47, and 82–85 each bind NADP(+); these read YGSQ and DQVQ. Residue His-107 is part of the active site. Residue Gly-133 coordinates NADP(+). The region spanning 182–327 is the KARI C-terminal knotted domain; the sequence is TFREETETDL…GELRKMMSWL (146 aa). The Mg(2+) site is built by Asp-190, Glu-194, Glu-226, and Glu-230. Ser-251 contributes to the substrate binding site.

This sequence belongs to the ketol-acid reductoisomerase family. The cofactor is Mg(2+).

The enzyme catalyses (2R)-2,3-dihydroxy-3-methylbutanoate + NADP(+) = (2S)-2-acetolactate + NADPH + H(+). The catalysed reaction is (2R,3R)-2,3-dihydroxy-3-methylpentanoate + NADP(+) = (S)-2-ethyl-2-hydroxy-3-oxobutanoate + NADPH + H(+). It participates in amino-acid biosynthesis; L-isoleucine biosynthesis; L-isoleucine from 2-oxobutanoate: step 2/4. It functions in the pathway amino-acid biosynthesis; L-valine biosynthesis; L-valine from pyruvate: step 2/4. Functionally, involved in the biosynthesis of branched-chain amino acids (BCAA). Catalyzes an alkyl-migration followed by a ketol-acid reduction of (S)-2-acetolactate (S2AL) to yield (R)-2,3-dihydroxy-isovalerate. In the isomerase reaction, S2AL is rearranged via a Mg-dependent methyl migration to produce 3-hydroxy-3-methyl-2-ketobutyrate (HMKB). In the reductase reaction, this 2-ketoacid undergoes a metal-dependent reduction by NADPH to yield (R)-2,3-dihydroxy-isovalerate. This Maridesulfovibrio salexigens (strain ATCC 14822 / DSM 2638 / NCIMB 8403 / VKM B-1763) (Desulfovibrio salexigens) protein is Ketol-acid reductoisomerase (NADP(+)).